A 380-amino-acid chain; its full sequence is High affinity transport system protein p37 (380 aa).

The signal sequence occupies residues 1–26 (MLKRKKLLQGFLKFLPLIIPATIFVS). Cys-27 carries N-palmitoyl cysteine lipidation. The S-diacylglycerol cysteine moiety is linked to residue Cys-27. Residues 285–304 (NHFYTPTENNGKGDSEKSNN) are disordered.

It is found in the cell membrane. Its function is as follows. P37 is part of a high-affinity transport system. The sequence is that of High affinity transport system protein p37 (p37) from Mycoplasma pneumoniae (strain ATCC 29342 / M129 / Subtype 1) (Mycoplasmoides pneumoniae).